A 943-amino-acid chain; its full sequence is Protein translocase subunit SecA (943 aa).

Residues Q90, G108–T112, and D509 each bind ATP. The interval P535–K564 is disordered.

It belongs to the SecA family. As to quaternary structure, monomer and homodimer. Part of the essential Sec protein translocation apparatus which comprises SecA, SecYEG and auxiliary proteins SecDF. Other proteins may also be involved.

Its subcellular location is the cell inner membrane. It is found in the cellular thylakoid membrane. It localises to the cytoplasm. The catalysed reaction is ATP + H2O + cellular proteinSide 1 = ADP + phosphate + cellular proteinSide 2.. Functionally, part of the Sec protein translocase complex. Interacts with the SecYEG preprotein conducting channel. Has a central role in coupling the hydrolysis of ATP to the transfer of proteins into and across the cell membrane, serving as an ATP-driven molecular motor driving the stepwise translocation of polypeptide chains across the membrane. Probably participates in protein translocation into and across both the cytoplasmic and thylakoid membranes in cyanobacterial cells. This Prochlorococcus marinus (strain MIT 9215) protein is Protein translocase subunit SecA.